The primary structure comprises 189 residues: Putative transcription factor ovo-like protein 3 (189 aa).

Residues 1 to 20 (MPRVFLVRSRRPQPPNWSHL) are disordered. C2H2-type zinc fingers lie at residues 69–91 (LGCP…LKCH), 97–119 (HVCH…MRTH), 125–148 (FRCG…AKVH), and 164–186 (HVCE…RTLH).

It belongs to the krueppel C2H2-type zinc-finger protein family.

It is found in the nucleus. In terms of biological role, may act as a transcription regulator. This chain is Putative transcription factor ovo-like protein 3 (Ovol3), found in Mus musculus (Mouse).